Here is a 485-residue protein sequence, read N- to C-terminus: Keratin, type I cytoskeletal 14 (485 aa).

Positions 1 to 15 are enriched in polar residues; that stretch reads MATCSRQFTSSSSMK. The disordered stretch occupies residues 1-21; that stretch reads MATCSRQFTSSSSMKGSCGIG. A head region spans residues 1 to 121; that stretch reads MATCSRQFTS…GLGDGLLVGS (121 aa). Positions 122-157 are coil 1A; the sequence is EKVTMQNLNDRLATYLDKVRALEEANSDLEVKIRDW. In terms of domain architecture, IF rod spans 122-433; that stretch reads EKVTMQNLND…RLLEGEDAHL (312 aa). A linker 1 region spans residues 158–175; that stretch reads YQRQRPTEIKDYSPYFKT. Residues 176 to 267 are coil 1B; the sequence is IEDLKSKILA…KNHEEEMASM (92 aa). Positions 268-290 are linker 12; that stretch reads RGQVGGDVNVEMDAAPGVDLSRI. The segment at 291–429 is coil 2; that stretch reads LNEMRDQYEK…ATYRRLLEGE (139 aa). Residues 430 to 485 form a tail region; that stretch reads DAHLSSAQFSSSSQFSSGSQSSRDVTSTNRQIRTKVMDVHDGKVVSTHEQVLRTKN. The segment at 432–485 is interaction with Type I keratins and keratin filaments; that stretch reads HLSSAQFSSSSQFSSGSQSSRDVTSTNRQIRTKVMDVHDGKVVSTHEQVLRTKN. A compositionally biased stretch (low complexity) spans 437–451; sequence QFSSSSQFSSGSQSS. Positions 437–458 are disordered; that stretch reads QFSSSSQFSSGSQSSRDVTSTN. Ser448 is subject to Phosphoserine.

Belongs to the intermediate filament family. In terms of assembly, heterotetramer of two type I and two type II keratins. Forms a disulfide-linked heterodimer (via 2B domains) with KRT5 (via 2B domains). Forms a heterodimer with KRT1; the interaction is more abundant in the absence of KRT5. Interacts with TRADD and with keratin filaments. Associates with other type I keratins. Interacts with EPPK1. Interacts with KLHL24. Interacts with PKP1 (via N-terminus) and PKP2. Post-translationally, a disulfide bond is formed between rather than within filaments and promotes the formation of a keratin filament cage around the nucleus. Ubiquitinated by the BCR(KLHL24) E3 ubiquitin ligase complex. As to expression, expressed in most cells of squamous cell carcinomas, in spinous and suprabasal cells around the branching papillary region of papillomas, and weakly in a few proliferative cells of hyperplastic tissue.

Its subcellular location is the cytoplasm. The protein localises to the nucleus. Functionally, the nonhelical tail domain is involved in promoting KRT5-KRT14 filaments to self-organize into large bundles and enhances the mechanical properties involved in resilience of keratin intermediate filaments in vitro. The polypeptide is Keratin, type I cytoskeletal 14 (Krt14) (Rattus norvegicus (Rat)).